The primary structure comprises 251 residues: Ribonuclease 3 (251 aa).

The RNase III domain occupies 3–125; sequence LATLETRLGH…LFGAVFLDAG (123 aa). A Mg(2+)-binding site is contributed by Glu-38. Residue Asp-42 is part of the active site. The Mg(2+) site is built by Asp-111 and Glu-114. Glu-114 is an active-site residue. A DRBM domain is found at 152–222; the sequence is DAKTLLQEFL…AKLALEAALV (71 aa).

This sequence belongs to the ribonuclease III family. Homodimer. Mg(2+) is required as a cofactor.

It localises to the cytoplasm. It carries out the reaction Endonucleolytic cleavage to 5'-phosphomonoester.. Its function is as follows. Digests double-stranded RNA. Involved in the processing of primary rRNA transcript to yield the immediate precursors to the large and small rRNAs (23S and 16S). Processes some mRNAs, and tRNAs when they are encoded in the rRNA operon. Processes pre-crRNA and tracrRNA of type II CRISPR loci if present in the organism. This chain is Ribonuclease 3, found in Bordetella avium (strain 197N).